The chain runs to 347 residues: Lipoyl synthase (347 aa).

[4Fe-4S] cluster is bound by residues Cys-55, Cys-60, Cys-66, Cys-81, Cys-85, Cys-88, and Ser-292. The Radical SAM core domain maps to 67–281; that stretch reads WEDREASFLI…SEAAYDMGFP (215 aa).

Belongs to the radical SAM superfamily. Lipoyl synthase family. The cofactor is [4Fe-4S] cluster.

The protein localises to the cytoplasm. It catalyses the reaction [[Fe-S] cluster scaffold protein carrying a second [4Fe-4S](2+) cluster] + N(6)-octanoyl-L-lysyl-[protein] + 2 oxidized [2Fe-2S]-[ferredoxin] + 2 S-adenosyl-L-methionine + 4 H(+) = [[Fe-S] cluster scaffold protein] + N(6)-[(R)-dihydrolipoyl]-L-lysyl-[protein] + 4 Fe(3+) + 2 hydrogen sulfide + 2 5'-deoxyadenosine + 2 L-methionine + 2 reduced [2Fe-2S]-[ferredoxin]. It participates in protein modification; protein lipoylation via endogenous pathway; protein N(6)-(lipoyl)lysine from octanoyl-[acyl-carrier-protein]: step 2/2. In terms of biological role, catalyzes the radical-mediated insertion of two sulfur atoms into the C-6 and C-8 positions of the octanoyl moiety bound to the lipoyl domains of lipoate-dependent enzymes, thereby converting the octanoylated domains into lipoylated derivatives. The chain is Lipoyl synthase from Corynebacterium urealyticum (strain ATCC 43042 / DSM 7109).